Consider the following 163-residue polypeptide: Probable chemoreceptor glutamine deamidase CheD (163 aa).

It belongs to the CheD family.

It catalyses the reaction L-glutaminyl-[protein] + H2O = L-glutamyl-[protein] + NH4(+). Functionally, probably deamidates glutamine residues to glutamate on methyl-accepting chemotaxis receptors (MCPs), playing an important role in chemotaxis. The sequence is that of Probable chemoreceptor glutamine deamidase CheD from Borreliella afzelii (strain PKo) (Borrelia afzelii).